Here is a 517-residue protein sequence, read N- to C-terminus: Quinol oxidase subunit 1 (517 aa).

12 helical membrane passes run Val19–Met39, Ile64–Phe84, Gln98–Pro118, Met150–Ile170, Ile185–Ala205, Trp226–Phe246, Ile271–Leu291, Thr303–Thr323, Val333–Val353, Val369–Phe389, Ile412–Gly432, and Ile460–Ala480. Fe(II)-heme a is bound at residue His65. Positions 235, 239, 284, and 285 each coordinate Cu cation. Residues His235–Tyr239 constitute a cross-link (1'-histidyl-3'-tyrosine (His-Tyr)). His372 lines the heme a3 pocket. His374 is a binding site for Fe(II)-heme a.

This sequence belongs to the heme-copper respiratory oxidase family.

Its subcellular location is the cell membrane. It carries out the reaction 2 a quinol + O2 = 2 a quinone + 2 H2O. In terms of biological role, catalyzes the reduction of oxygen to water. Subunits I, II and III form the functional core of the enzyme complex. Electrons originating in caldariella quinol are transferred to the binuclear center formed by heme A3 and Cu(B). Functionally, subunit I binds heme a and the bimetallic center. This is Quinol oxidase subunit 1 (soxB) from Sulfolobus acidocaldarius (strain ATCC 33909 / DSM 639 / JCM 8929 / NBRC 15157 / NCIMB 11770).